We begin with the raw amino-acid sequence, 49 residues long: Large ribosomal subunit protein eL40 (49 aa).

The protein belongs to the eukaryotic ribosomal protein eL40 family.

The sequence is that of Large ribosomal subunit protein eL40 from Methanosarcina barkeri (strain Fusaro / DSM 804).